Reading from the N-terminus, the 509-residue chain is Lysine--tRNA ligase (509 aa).

Residues 1 to 18 (MSEQNPTQAAKQAPQQEL) are compositionally biased toward polar residues. Residues 1–20 (MSEQNPTQAAKQAPQQELND) are disordered. Glutamate 418 and glutamate 425 together coordinate Mg(2+).

This sequence belongs to the class-II aminoacyl-tRNA synthetase family. In terms of assembly, homodimer. Mg(2+) serves as cofactor.

It is found in the cytoplasm. The catalysed reaction is tRNA(Lys) + L-lysine + ATP = L-lysyl-tRNA(Lys) + AMP + diphosphate. This is Lysine--tRNA ligase from Psychromonas ingrahamii (strain DSM 17664 / CCUG 51855 / 37).